An 87-amino-acid polypeptide reads, in one-letter code: UPF0237 protein YjhC (87 aa).

Residues 4 to 76 (VVTVVGADKI…EALGVNIHVQ (73 aa)) enclose the ACT domain.

Belongs to the UPF0237 family.

The polypeptide is UPF0237 protein YjhC (yjhC) (Lactococcus lactis subsp. lactis (strain IL1403) (Streptococcus lactis)).